The primary structure comprises 443 residues: ATP-dependent protease ATPase subunit HslU (443 aa).

ATP-binding positions include Ile-18, 60 to 65, Asp-256, Glu-321, and Arg-393; that span reads GVGKTE.

It belongs to the ClpX chaperone family. HslU subfamily. In terms of assembly, a double ring-shaped homohexamer of HslV is capped on each side by a ring-shaped HslU homohexamer. The assembly of the HslU/HslV complex is dependent on binding of ATP.

It is found in the cytoplasm. Its function is as follows. ATPase subunit of a proteasome-like degradation complex; this subunit has chaperone activity. The binding of ATP and its subsequent hydrolysis by HslU are essential for unfolding of protein substrates subsequently hydrolyzed by HslV. HslU recognizes the N-terminal part of its protein substrates and unfolds these before they are guided to HslV for hydrolysis. This is ATP-dependent protease ATPase subunit HslU from Enterobacter sp. (strain 638).